The sequence spans 497 residues: Beta-glucosidase 8 (497 aa).

A signal peptide spans 1–22 (MKHFNLLSIILVIVLATSYIDA). An a beta-D-glucoside-binding site is contributed by Gln42. Asn65 carries N-linked (GlcNAc...) asparagine glycosylation. A beta-D-glucoside-binding positions include His139 and 184–185 (NE). The active-site Proton donor is the Glu185. Asn202 carries an N-linked (GlcNAc...) asparagine glycan. Tyr319 is a binding site for a beta-D-glucoside. Asn354 carries N-linked (GlcNAc...) asparagine glycosylation. Residues Glu387, Trp430, and Phe446 each coordinate a beta-D-glucoside. Residue Glu387 is the Nucleophile of the active site. N-linked (GlcNAc...) asparagine glycans are attached at residues Asn452, Asn474, and Asn490.

The protein belongs to the glycosyl hydrolase 1 family.

The enzyme catalyses Hydrolysis of terminal, non-reducing beta-D-glucosyl residues with release of beta-D-glucose.. The chain is Beta-glucosidase 8 from Arabidopsis thaliana (Mouse-ear cress).